The following is a 304-amino-acid chain: Secreted mono- and diacylglycerol lipase MDL4 (304 aa).

Positions 1–19 (MRFGGVVSLVLGFIVSVLA) are cleaved as a signal peptide. Cys55 and Cys297 are disulfide-bonded. 2 N-linked (GlcNAc...) asparagine glycosylation sites follow: Asn102 and Asn161. Ser171 serves as the catalytic Nucleophile. Asp228 is an active-site residue. A glycan (N-linked (GlcNAc...) asparagine) is linked at Asn253. His281 is an active-site residue.

This sequence belongs to the AB hydrolase superfamily. Lipase family. Class 3 subfamily.

Its subcellular location is the secreted. The protein resides in the cell wall. The enzyme catalyses a monoacylglycerol + H2O = glycerol + a fatty acid + H(+). It carries out the reaction a diacylglycerol + H2O = a monoacylglycerol + a fatty acid + H(+). Functionally, secreted lipase involved in Dandruff and seborrheic dermatitis (D/SD) probably via lipase-mediated breakdown of sebaceous lipids and release of irritating free fatty acids. Shows activity against monoglyceride and diglyceride substrates, but not triglyceride substrates and does not exhibit regio-selective production of diacylglycerols. Cleaves oleic acid from 1,2 isomers of diolein on both the 1 and the 2 position of the glycerol backbone, resulting mainly in free fatty acids but no monoolein is detected. Shows activity on monoolein and liberates mostly free fatty acids, but can also perform the reverse reaction and produce diolein. The chain is Secreted mono- and diacylglycerol lipase MDL4 from Malassezia globosa (strain ATCC MYA-4612 / CBS 7966) (Dandruff-associated fungus).